We begin with the raw amino-acid sequence, 488 residues long: Glutamate--tRNA ligase (488 aa).

Positions 12–22 (PSPTGYMHVGN) match the 'HIGH' region motif. Residues Cys-109, Cys-111, Cys-136, and His-138 each contribute to the Zn(2+) site. A 'KMSKS' region motif is present at residues 253-257 (KLSKR). Lys-256 lines the ATP pocket.

Belongs to the class-I aminoacyl-tRNA synthetase family. Glutamate--tRNA ligase type 1 subfamily. In terms of assembly, monomer. It depends on Zn(2+) as a cofactor.

The protein resides in the cytoplasm. It catalyses the reaction tRNA(Glu) + L-glutamate + ATP = L-glutamyl-tRNA(Glu) + AMP + diphosphate. Its function is as follows. Catalyzes the attachment of glutamate to tRNA(Glu) in a two-step reaction: glutamate is first activated by ATP to form Glu-AMP and then transferred to the acceptor end of tRNA(Glu). This chain is Glutamate--tRNA ligase, found in Clostridium tetani (strain Massachusetts / E88).